A 275-amino-acid chain; its full sequence is tRNA pseudouridine synthase A (275 aa).

Residue Asp-55 is the Nucleophile of the active site. Tyr-111 lines the substrate pocket.

The protein belongs to the tRNA pseudouridine synthase TruA family.

It catalyses the reaction uridine(38/39/40) in tRNA = pseudouridine(38/39/40) in tRNA. Formation of pseudouridine at positions 38, 39 and 40 in the anticodon stem and loop of transfer RNAs. In Methanococcoides burtonii (strain DSM 6242 / NBRC 107633 / OCM 468 / ACE-M), this protein is tRNA pseudouridine synthase A.